The following is a 504-amino-acid chain: Sucrose phosphorylase (504 aa).

A substrate-binding site is contributed by aspartate 50. Sucrose is bound by residues histidine 88, 190–192, glutamate 232, 289–290, 342–345, and arginine 399; these read RLD, HD, and DLYQ. Catalysis depends on aspartate 192, which acts as the Nucleophile. Residue glutamate 232 is the Proton donor of the active site.

This sequence belongs to the glycosyl hydrolase 13 family. Sucrose phosphorylase subfamily. As to quaternary structure, homodimer.

It carries out the reaction sucrose + phosphate = D-fructose + alpha-D-glucose 1-phosphate. Catalyzes the reversible phosphorolysis of sucrose into alpha-D-glucose 1-phosphate (Glc1P) and D-fructose. Is involved in sucrose degradation. Also displays transglucosylation activity in vitro, by transferring the glucosyl moiety of Glc1P to a broad range of monomeric sugars, such as D- and L-arabinose, D- and L-arabitol, and xylitol. The protein is Sucrose phosphorylase of Bifidobacterium adolescentis (strain ATCC 15703 / DSM 20083 / NCTC 11814 / E194a).